Consider the following 736-residue polypeptide: Nucleoporin nup60 (736 aa).

Positions 1 to 46 (MSSGPIRTLHKGKAARNRTPYDRIAASKDGNHSNGPQTPSKSIFQR) are disordered. Over residues 19 to 31 (TPYDRIAASKDGN) the composition is skewed to basic and acidic residues. The segment covering 32–43 (HSNGPQTPSKSI) has biased composition (polar residues). Phosphoserine occurs at positions 157, 159, 161, and 162. Disordered stretches follow at residues 178–210 (RAAAISKRESGVSSEPRARTSSLTPGNTPNSAK), 295–321 (DTSFTNVPTSSPLHQSTTANHPEKTPS), 338–519 (TPSI…PNET), 565–614 (AVTD…RSLF), and 647–701 (EQAE…FPKF). 2 stretches are compositionally biased toward polar residues: residues 196–210 (RTSSLTPGNTPNSAK) and 295–314 (DTSFTNVPTSSPLHQSTTAN). Positions 375–397 (QIRPSSEKSEPEKKEPSAFETLE) are enriched in basic and acidic residues. The segment covering 456–473 (SATTDKPSPPVSSIFSFN) has biased composition (polar residues). Low complexity-rich tracts occupy residues 474 to 505 (APSAASTKPSPAVSSTFSFNAPTTTPSATSFS) and 573 to 587 (EVSSSNQASSSTMIS). Over residues 588–597 (QPNTGFSFGS) the composition is skewed to polar residues. The segment covering 664 to 692 (EVEKPSAEGTNEHKQDATMTLEKTDKQGS) has biased composition (basic and acidic residues).

Component of the nuclear pore complex (NPC). NPC constitutes the exclusive means of nucleocytoplasmic transport. NPCs allow the passive diffusion of ions and small molecules and the active, nuclear transport receptor-mediated bidirectional transport of macromolecules such as proteins, RNAs, ribonucleoparticles (RNPs), and ribosomal subunits across the nuclear envelope.

It is found in the nucleus. Its subcellular location is the nuclear pore complex. The protein resides in the nucleus membrane. Functionally, functions as a component of the nuclear pore complex (NPC). NPC components, collectively referred to as nucleoporins (NUPs), can play the role of both NPC structural components and of docking or interaction partners for transiently associated nuclear transport factors. Active directional transport is assured by both, a Phe-Gly (FG) repeat affinity gradient for these transport factors across the NPC and a transport cofactor concentration gradient across the nuclear envelope. The polypeptide is Nucleoporin nup60 (nup60) (Schizosaccharomyces pombe (strain 972 / ATCC 24843) (Fission yeast)).